A 192-amino-acid chain; its full sequence is Amelogenin, Y isoform (192 aa).

A signal peptide spans 1 to 16 (MGTWILFACLLGAAYS). A disordered region spans residues 73-192 (QSPQNHALQP…TDKTKREEVD (120 aa)). Residues 87–105 (PMVPAQQPVVPQQPMMPVP) are compositionally biased toward low complexity. The span at 108-117 (HSMTPIQHHQ) shows a compositional bias: polar residues. Residues 132 to 173 (PIQPQPHQPLQPQPPVHPIQRLPPQPPLPPIFPMQPLPPVLP) are compositionally biased toward pro residues.

This sequence belongs to the amelogenin family.

It is found in the secreted. The protein resides in the extracellular space. It localises to the extracellular matrix. Its function is as follows. Plays a role in the biomineralization of teeth. Seems to regulate the formation of crystallites during the secretory stage of tooth enamel development. Thought to play a major role in the structural organization and mineralization of developing enamel. This chain is Amelogenin, Y isoform (AMELY), found in Bos taurus (Bovine).